A 565-amino-acid polypeptide reads, in one-letter code: MKMRPRYSVIASAVSLGFVLSKSVMALGQPDTGSLNRELEQRRIQPEAKPSGELFNQAAKSPYTAQYKQELKFPLTQVQILDRNNQEVVTDELAHILKNYVGKEVSLSDLSNLANEISEFYRNNNYLVAKAILPPQEIEQGTVKILLLKGNVGEIRLQNHSALSNKFVSRLSNTTVNTSEFILKDELEKFALTINDVPGVNAGLQLSAGKKVGEANLLIKINDAKRFSSYVSVDNQGNKYTGRYRLAAGTKVNNLTGWGDELKLDLLSSNQANLKNARIDYSSLIDGYSTRFGVTANYLHYKLGGNFKSLQSQGHSHNLGAYLLHPTIRTPNFRLSTKVSFNHQNLTDEQQAVTVKQKRKINSLTVGIDGSWNLIKDGTTYFSLSTLFGNLANQTNEKKHNAKEDFQPQSHFTVYNYRLSHEQILPKSFAFNIGINGQFADKTLESSQKMLLGGLSGVRGHQAGAASVDEGHLIQTEFKHYLPVFSQSVLVSSLFYDYGFGKYYKNSQSLAQSVKNSVKLQSVGAGLSFSDAGSYAINVSVAKPLDNNIDNADKHQFWLSMIKTF.

The signal sequence occupies residues 1–26; the sequence is MKMRPRYSVIASAVSLGFVLSKSVMA. In terms of domain architecture, POTRA spans 73–150; sequence FPLTQVQILD…GTVKILLLKG (78 aa).

It belongs to the TPS (TC 1.B.20) family.

The protein resides in the cell outer membrane. Likely functions in the release of soluble HxuA from the cell. In terms of biological role, probable member of a two partner secretion pathway (TPS) in which it mediates the secretion of HuxA. The protein is Heme/hemopexin transporter protein HuxB (hxuB) of Haemophilus influenzae (strain 86-028NP).